The following is a 396-amino-acid chain: NADH-quinone oxidoreductase subunit D (396 aa).

This sequence belongs to the complex I 49 kDa subunit family. NDH-1 is composed of 14 different subunits. Subunits NuoB, C, D, E, F, and G constitute the peripheral sector of the complex.

The protein resides in the cell inner membrane. It catalyses the reaction a quinone + NADH + 5 H(+)(in) = a quinol + NAD(+) + 4 H(+)(out). Functionally, NDH-1 shuttles electrons from NADH, via FMN and iron-sulfur (Fe-S) centers, to quinones in the respiratory chain. The immediate electron acceptor for the enzyme in this species is believed to be ubiquinone. Couples the redox reaction to proton translocation (for every two electrons transferred, four hydrogen ions are translocated across the cytoplasmic membrane), and thus conserves the redox energy in a proton gradient. The polypeptide is NADH-quinone oxidoreductase subunit D (Brucella suis biovar 1 (strain 1330)).